Here is an 89-residue protein sequence, read N- to C-terminus: HssA/B-like protein DDB_G0295685 (89 aa).

Belongs to the hssA/B family.

The sequence is that of HssA/B-like protein DDB_G0295685 from Dictyostelium discoideum (Social amoeba).